The chain runs to 529 residues: Probable serine/threonine protein phosphatase 2A regulatory subunit B''epsilon (529 aa).

The interval 60-110 (KSGTPTNKSKNLPSVFLSSSTPPLSPRSSSGSPRFSRQRTSPPSLHSPLRS) is disordered. Residues 71–109 (LPSVFLSSSTPPLSPRSSSGSPRFSRQRTSPPSLHSPLR) show a composition bias toward low complexity. The 36-residue stretch at 381–416 (SSEPSLEYWFKCVDLDGNGVITSNEMQFFFEEQLHR) folds into the EF-hand domain. Asp-394, Asp-396, Asn-398, and Glu-405 together coordinate Ca(2+). The disordered stretch occupies residues 507 to 529 (EEDVDEVSNGSADVWDEPLEPPF). A compositionally biased stretch (acidic residues) spans 520–529 (VWDEPLEPPF).

In terms of assembly, PP2A consists of a common heterodimeric core enzyme, composed of a 36 kDa catalytic subunit (subunit C) and a 65 kDa constant regulatory subunit (PR65 or subunit A), that associates with a variety of regulatory subunits. Proteins that associate with the core dimer include three families of regulatory subunits B (the R2/B/PR55/B55, R3/B''/PR72/PR130/PR59 and R5/B'/B56 families) and cell signaling molecules.

Probable regulatory subunit of type 2A protein phosphatase. The polypeptide is Probable serine/threonine protein phosphatase 2A regulatory subunit B''epsilon (B''EPSILON) (Arabidopsis thaliana (Mouse-ear cress)).